Consider the following 752-residue polypeptide: MEAPGIVWVEESVSAITLYAVWLPPRTRDCLHALLYLVCRDAAGEARARFAEVSVGSSDLQDFYGSPDVSAPGAVAAARAATAPAASPLEPLGDPTLWRALYACVLAALERQTGRWALFVPLRLGWDPQTGLVVRVERASWGPPAAPRAALLDVEAKVDVDPLALSARVAEHPGARLAWARLAAIRDSPQCASSASLAVTITTRTARFAREYTTLAFPPTRKEGAFADLVEVCEVGLRPRGHPQRVTARVLLPRGYDYFVSAGDGFSAPALVALFRQWHTTVHAAPGALAPVFAFLGPGFEVRGGPVQYFAVLGFPGWPTFTVPAAAAAESARDLVRGAAATHAACLGAWPAVGARVVLPPRAWPAVASEAAGRLLPAFREAVARWHPTATTIQLLDPPAAVGPVWTARFCFSGLQAQLLAALAGLGEAGLPEARGRAGLERLDALVAAAPSEPWARAVLERLVPDACDACPALRQLLGGVMAAVCLQIEQTASSVKFAVCGGTGAAFWGLFNVDPGDADAAHGAIQDARRALEASVRAVLSANGIRPRLAPSLAPEGVYTHVVTWSQTGAWFWNSRDDTDFLQGFPLRGAAYAAAAEVMRDALRRILRRPAAGPPEEAVCAARGVMEDACDRFVLDAFGRRLDAEYWSVLTPPGEADDPLPQTAFRGGALLDAEQYWRRVVRVCPGGGESVGVPVDLYPRPLVLPPVDCAHHLREILREIQLVFTGVLEGVWGEGGSFVYPFDEKIRFLFP.

Belongs to the herpesviridae HEPA family. In terms of assembly, associates with the primase and the helicase to form the helicase-primase complex. Interacts with the origin-binding protein. Interacts with the polymerase catalytic subunit.

It is found in the host nucleus. Component of the helicase/primase complex. Unwinds the DNA at the replication forks and generates single-stranded DNA for both leading and lagging strand synthesis. The primase synthesizes short RNA primers on the lagging strand that the polymerase presumably elongates using dNTPs. The primase-associated factor has no known catalytic activity in the complex and may serve to facilitate the formation of the replisome by directly interacting with the origin-binding protein and the polymerase. This is DNA helicase/primase complex-associated protein from Homo sapiens (Human).